The following is a 131-amino-acid chain: MKTNCEFPLLCLLIVLVANVEGEVEDNELKMVKRLWRNWEDPEQRQLLDQEAEQEKQREKRLWRNWEDLELRQLLNEFAENQREKRLWRNWERRQVANEDDGEKPKELWRNWEDLKRRQVVDLNDEQKTTG.

The first 22 residues, 1 to 22, serve as a signal peptide directing secretion; that stretch reads MKTNCEFPLLCLLIVLVANVEG. A propeptide spanning residues 23–94 is cleaved from the precursor; that stretch reads EVEDNELKMV…KRLWRNWERR (72 aa). 3 RLWRNWE repeats span residues 34-40, 61-67, and 86-92; these read RLWRNWE. Q95 is subject to Pyrrolidone carboxylic acid. The stretch at 107–113 is one RLWRNWE 4; approximate repeat; sequence ELWRNWE. The propeptide occupies 112-131; it reads WEDLKRRQVVDLNDEQKTTG.

The protein belongs to the scoloptoxin-08 family. In terms of tissue distribution, expressed by the venom gland.

The protein localises to the secreted. The sequence is that of U-scoloptoxin-Er5e from Ethmostigmus rubripes (Giant centipede).